The sequence spans 458 residues: Argininosuccinate lyase (458 aa).

The protein belongs to the lyase 1 family. Argininosuccinate lyase subfamily.

It localises to the cytoplasm. The enzyme catalyses 2-(N(omega)-L-arginino)succinate = fumarate + L-arginine. It functions in the pathway amino-acid biosynthesis; L-arginine biosynthesis; L-arginine from L-ornithine and carbamoyl phosphate: step 3/3. This is Argininosuccinate lyase from Geotalea daltonii (strain DSM 22248 / JCM 15807 / FRC-32) (Geobacter daltonii).